A 308-amino-acid chain; its full sequence is GTP-binding protein RAD (308 aa).

A compositionally biased stretch (gly residues) spans 1–16; sequence MTLNGGGSGAGGSRGG. The interval 1–88 is disordered; the sequence is MTLNGGGSGA…SLSSGGSDSD (88 aa). Arg-24 is subject to Omega-N-methylarginine. Position 26 is a phosphoserine (Ser-26). Residues 48–68 are compositionally biased toward low complexity; it reads QAALTPGALTAAAAGTGTQGP. GTP-binding positions include 98–105 and 203–206; these read GAPGVGKS and NKSD. The calmodulin-binding stretch occupies residues 278 to 297; it reads AKRFLGRIVARNSRKMAFRA.

This sequence belongs to the small GTPase superfamily. RGK family. Interacts with calmodulin preferentially in the inactive, GDP-bound form. Binds CAMKII which is capable of phosphorylating RAD in vitro. Interacts with CAMK2D. Interacts with CACNB2; interaction may be involved in beta-adrenergic regulation of heart rate and contractile force. Interaction with CACNB2 regulates the trafficking of CACNA1C to the cell membrane. Most abundantly expressed in the heart. Also found in the skeletal muscle and lung. Lesser amounts in placenta and kidney. Also detected in adipose tissue. Overexpressed in muscle of type II diabetic humans.

It is found in the cell membrane. May regulate basal voltage-dependent L-type Ca(2+) currents and be required for beta-adrenergic augmentation of Ca(2+) influx in cardiomyocytes, thereby regulating increases in heart rate and contractile force. May play an important role in cardiac antiarrhythmia via the strong suppression of voltage-gated L-type Ca(2+) currents. Regulates voltage-dependent L-type calcium channel subunit alpha-1C trafficking to the cell membrane. Inhibits cardiac hypertrophy through the calmodulin-dependent kinase II (CaMKII) pathway. Inhibits phosphorylation and activation of CAMK2D. The protein is GTP-binding protein RAD (RRAD) of Homo sapiens (Human).